The sequence spans 272 residues: HMP-PP phosphatase (272 aa).

The active-site Nucleophile is the aspartate 8. Mg(2+) is bound by residues aspartate 8, aspartate 10, and aspartate 212.

Belongs to the HAD-like hydrolase superfamily. Cof family. Requires Mg(2+) as cofactor.

The enzyme catalyses 4-amino-2-methyl-5-(diphosphooxymethyl)pyrimidine + H2O = 4-amino-2-methyl-5-(phosphooxymethyl)pyrimidine + phosphate + H(+). In terms of biological role, catalyzes the hydrolysis of 4-amino-2-methyl-5-hydroxymethylpyrimidine pyrophosphate (HMP-PP) to 4-amino-2-methyl-5-hydroxymethylpyrimidine phosphate (HMP-P). The sequence is that of HMP-PP phosphatase from Escherichia coli (strain UTI89 / UPEC).